We begin with the raw amino-acid sequence, 44 residues long: Opistoporin-2 (44 aa).

As to expression, expressed by the venom gland.

It is found in the secreted. It localises to the target cell membrane. In terms of biological role, at high concentrations, acts as a pore former in cellular membranes and causes the leakage of the cells. At submicromolar concentrations, degranulates granulocytes and has a weak hemolytic activity against human erythrocytes. Also strongly inhibits the production of superoxide anions. Has a strong antibacterial activity against Gram-negative bacteria but is less active against Gram-positive bacteria. Also has antifungal activity. This chain is Opistoporin-2, found in Opistophthalmus carinatus (African yellow leg scorpion).